The primary structure comprises 319 residues: Beta-ketoacyl-[acyl-carrier-protein] synthase III (319 aa).

Residues Cys113 and His246 contribute to the active site. An ACP-binding region spans residues 247–251 (QANRR). Asn276 is a catalytic residue.

It belongs to the thiolase-like superfamily. FabH family. Homodimer.

It is found in the cytoplasm. The catalysed reaction is malonyl-[ACP] + acetyl-CoA + H(+) = 3-oxobutanoyl-[ACP] + CO2 + CoA. It participates in lipid metabolism; fatty acid biosynthesis. Catalyzes the condensation reaction of fatty acid synthesis by the addition to an acyl acceptor of two carbons from malonyl-ACP. Catalyzes the first condensation reaction which initiates fatty acid synthesis and may therefore play a role in governing the total rate of fatty acid production. Possesses both acetoacetyl-ACP synthase and acetyl transacylase activities. Its substrate specificity determines the biosynthesis of branched-chain and/or straight-chain of fatty acids. The chain is Beta-ketoacyl-[acyl-carrier-protein] synthase III from Rhizorhabdus wittichii (strain DSM 6014 / CCUG 31198 / JCM 15750 / NBRC 105917 / EY 4224 / RW1) (Sphingomonas wittichii).